Reading from the N-terminus, the 515-residue chain is Maturase K (515 aa).

This sequence belongs to the intron maturase 2 family. MatK subfamily.

The protein resides in the plastid. It localises to the chloroplast. Its function is as follows. Usually encoded in the trnK tRNA gene intron. Probably assists in splicing its own and other chloroplast group II introns. This chain is Maturase K, found in Picea pungens (Colorado spruce).